The primary structure comprises 122 residues: Small ribosomal subunit protein uS13 (122 aa).

Residues 93 to 122 (RRGLPVRGQRTKTNARTRKGPKKTIAGKKK) are disordered.

Belongs to the universal ribosomal protein uS13 family. Part of the 30S ribosomal subunit. Forms a loose heterodimer with protein S19. Forms two bridges to the 50S subunit in the 70S ribosome.

In terms of biological role, located at the top of the head of the 30S subunit, it contacts several helices of the 16S rRNA. In the 70S ribosome it contacts the 23S rRNA (bridge B1a) and protein L5 of the 50S subunit (bridge B1b), connecting the 2 subunits; these bridges are implicated in subunit movement. Contacts the tRNAs in the A and P-sites. The protein is Small ribosomal subunit protein uS13 of Corynebacterium kroppenstedtii (strain DSM 44385 / JCM 11950 / CIP 105744 / CCUG 35717).